We begin with the raw amino-acid sequence, 336 residues long: Aspartate--ammonia ligase (336 aa).

It belongs to the class-II aminoacyl-tRNA synthetase family. AsnA subfamily.

The protein localises to the cytoplasm. The catalysed reaction is L-aspartate + NH4(+) + ATP = L-asparagine + AMP + diphosphate + H(+). The protein operates within amino-acid biosynthesis; L-asparagine biosynthesis; L-asparagine from L-aspartate (ammonia route): step 1/1. The protein is Aspartate--ammonia ligase of Lactobacillus johnsonii (strain CNCM I-12250 / La1 / NCC 533).